We begin with the raw amino-acid sequence, 395 residues long: MTTMGDLPGDLVEEILSRVPLTSLRAIRSTCQKWNSLSKSQICGRKATAAENKFLGFMMKDSRVCSMKFDLQGIRNDDGELVEPSIKQVSKLDQIEVSQVFHCDGLVLCIIKDNTGLLVWNPYLGQTRWIHPRNNYQIEDRYALGYDNNRNHKILRIFDLYPSSNRVFGYEVYDFSSNSWKVLDVIPEWDIQSHFRGASLKGNAYFPAQKKETVGGIKTINIEDVLLCFDFTRERFGPPLPLPFHSYNADFFVSLACVREEQLAVLYQRWGAFETIEICVTNKIDPNTVSWSKFLITSTGFPVDTFSGSFFIDEEKKVAVVFDLDRYKPTETCRYQIVYIIGQDEYFKSVNMGVAPNIAKNSYQAYCVPLVCSSSYVPSLVQLQINKPGKRKESN.

In terms of domain architecture, F-box spans 1 to 47 (MTTMGDLPGDLVEEILSRVPLTSLRAIRSTCQKWNSLSKSQICGRKA). Kelch repeat units follow at residues 154–202 (ILRI…SLKG), 210–256 (KKET…VSLA), 265–314 (VLYQ…FIDE), and 337–383 (IVYI…LVQL).

The sequence is that of F-box/kelch-repeat protein At3g13680 from Arabidopsis thaliana (Mouse-ear cress).